We begin with the raw amino-acid sequence, 165 residues long: NADPH-dependent 7-cyano-7-deazaguanine reductase (165 aa).

Residues 1–24 (MTTRSTDQTEHLRALGQKTPYPAA) are disordered. Cysteine 56 serves as the catalytic Thioimide intermediate. The Proton donor role is filled by aspartate 63. Residues 78–80 (VES) and 97–98 (ME) each bind substrate.

This sequence belongs to the GTP cyclohydrolase I family. QueF type 1 subfamily.

Its subcellular location is the cytoplasm. The catalysed reaction is 7-aminomethyl-7-carbaguanine + 2 NADP(+) = 7-cyano-7-deazaguanine + 2 NADPH + 3 H(+). It participates in tRNA modification; tRNA-queuosine biosynthesis. Catalyzes the NADPH-dependent reduction of 7-cyano-7-deazaguanine (preQ0) to 7-aminomethyl-7-deazaguanine (preQ1). This Nitratidesulfovibrio vulgaris (strain ATCC 29579 / DSM 644 / CCUG 34227 / NCIMB 8303 / VKM B-1760 / Hildenborough) (Desulfovibrio vulgaris) protein is NADPH-dependent 7-cyano-7-deazaguanine reductase.